Consider the following 239-residue polypeptide: Cysteine-rich venom protein natrin-1 (239 aa).

A signal peptide spans 1–18 (MIAFSLLCFAAVLQQSFG). Positions 37–165 (VDLHNSLRRR…AWSYFYVCQY (129 aa)) constitute an SCP domain. Intrachain disulfides connect cysteine 74/cysteine 152, cysteine 91/cysteine 166, cysteine 147/cysteine 163, cysteine 185/cysteine 192, cysteine 188/cysteine 197, cysteine 201/cysteine 234, cysteine 210/cysteine 228, and cysteine 219/cysteine 232. One can recognise a ShKT domain in the interval 201–234 (CTIYNKLTNCDSLLKQSSCQDDWIKSNCPASCFC).

In terms of tissue distribution, expressed by the venom gland.

It is found in the secreted. Inhibits calcium-activated potassium channels (KCa1.1/KCNMA1), voltage-gated potassium channel Kv1.3/KCNA3, and the calcium release channel/ryanodine receptor (RyR). Binds specifically to type 1 RyR (RyR1) from skeletal muscle. Inhibit both the binding of ryanodine to RyR1, and RyR1's calcium-channel activity. Inhibits carbachol-induced muscle contraction and weakly blocks muscle contraction evoked by potassium. This Naja atra (Chinese cobra) protein is Cysteine-rich venom protein natrin-1.